Here is a 172-residue protein sequence, read N- to C-terminus: MINVEIIRNYDKWREHKQINKALIKKVTQNVLLRFDNFSKIKQFELSILLTNTAEILTLNKQFRNIDKATNVLSFPSNKLNWQDLCFSNVSPKLELLIGYDYMHLGDIAFCYEVIYNESYEQQKTSENHFIHLLIHSILHLIGFDHQNDTEANIMENLEIEILSYFGIASPY.

Zn(2+)-binding residues include histidine 136, histidine 140, and histidine 146.

This sequence belongs to the endoribonuclease YbeY family. The cofactor is Zn(2+).

The protein resides in the cytoplasm. In terms of biological role, single strand-specific metallo-endoribonuclease involved in late-stage 70S ribosome quality control and in maturation of the 3' terminus of the 16S rRNA. The sequence is that of Endoribonuclease YbeY from Rickettsia canadensis (strain McKiel).